The chain runs to 127 residues: Aspartate 1-decarboxylase (127 aa).

Catalysis depends on Ser-25, which acts as the Schiff-base intermediate with substrate; via pyruvic acid. At Ser-25 the chain carries Pyruvic acid (Ser). Substrate is bound at residue Thr-57. Residue Tyr-58 is the Proton donor of the active site. 73 to 75 contacts substrate; the sequence is GAA.

The protein belongs to the PanD family. In terms of assembly, heterooctamer of four alpha and four beta subunits. It depends on pyruvate as a cofactor. Is synthesized initially as an inactive proenzyme, which is activated by self-cleavage at a specific serine bond to produce a beta-subunit with a hydroxyl group at its C-terminus and an alpha-subunit with a pyruvoyl group at its N-terminus.

The protein localises to the cytoplasm. It carries out the reaction L-aspartate + H(+) = beta-alanine + CO2. It participates in cofactor biosynthesis; (R)-pantothenate biosynthesis; beta-alanine from L-aspartate: step 1/1. Catalyzes the pyruvoyl-dependent decarboxylation of aspartate to produce beta-alanine. This Staphylococcus aureus (strain JH1) protein is Aspartate 1-decarboxylase.